Reading from the N-terminus, the 498-residue chain is Cytochrome P450 71B5 (498 aa).

Residues 3-23 (IFLCFLLLLPLSLIFLKKLLP) form a helical membrane-spanning segment. Residue C439 participates in heme binding.

It belongs to the cytochrome P450 family. Heme is required as a cofactor.

The protein resides in the membrane. This is Cytochrome P450 71B5 (CYP71B5) from Arabidopsis thaliana (Mouse-ear cress).